The primary structure comprises 527 residues: GMP synthase [glutamine-hydrolyzing] (527 aa).

The region spanning Lys-19 to Asp-212 is the Glutamine amidotransferase type-1 domain. The Nucleophile role is filled by Cys-96. Residues His-186 and Glu-188 contribute to the active site. A GMPS ATP-PPase domain is found at Trp-213–Arg-402. Residue Ser-240–Ser-246 participates in ATP binding.

Homodimer.

It catalyses the reaction XMP + L-glutamine + ATP + H2O = GMP + L-glutamate + AMP + diphosphate + 2 H(+). The protein operates within purine metabolism; GMP biosynthesis; GMP from XMP (L-Gln route): step 1/1. Functionally, catalyzes the synthesis of GMP from XMP. The sequence is that of GMP synthase [glutamine-hydrolyzing] from Streptococcus thermophilus (strain CNRZ 1066).